Here is a 92-residue protein sequence, read N- to C-terminus: Small ribosomal subunit protein bS20 (92 aa).

Positions 1–25 (MANSAQARKRARQAAKANSHNSALR) are disordered.

It belongs to the bacterial ribosomal protein bS20 family.

Functionally, binds directly to 16S ribosomal RNA. This is Small ribosomal subunit protein bS20 from Paraburkholderia phytofirmans (strain DSM 17436 / LMG 22146 / PsJN) (Burkholderia phytofirmans).